Reading from the N-terminus, the 115-residue chain is Large ribosomal subunit protein uL22 (115 aa).

The protein belongs to the universal ribosomal protein uL22 family. In terms of assembly, part of the 50S ribosomal subunit.

Functionally, this protein binds specifically to 23S rRNA; its binding is stimulated by other ribosomal proteins, e.g. L4, L17, and L20. It is important during the early stages of 50S assembly. It makes multiple contacts with different domains of the 23S rRNA in the assembled 50S subunit and ribosome. Its function is as follows. The globular domain of the protein is located near the polypeptide exit tunnel on the outside of the subunit, while an extended beta-hairpin is found that lines the wall of the exit tunnel in the center of the 70S ribosome. The sequence is that of Large ribosomal subunit protein uL22 from Ligilactobacillus salivarius (strain UCC118) (Lactobacillus salivarius).